Consider the following 1192-residue polypeptide: ATP-dependent helicase/deoxyribonuclease subunit B (1192 aa).

This sequence belongs to the helicase family. AddB/RexB type 2 subfamily. As to quaternary structure, heterodimer of AddA and RexB. Requires Mg(2+) as cofactor.

Functionally, the heterodimer acts as both an ATP-dependent DNA helicase and an ATP-dependent, dual-direction single-stranded exonuclease. Recognizes the chi site generating a DNA molecule suitable for the initiation of homologous recombination. This subunit has 5' -&gt; 3' nuclease activity but not helicase activity. The protein is ATP-dependent helicase/deoxyribonuclease subunit B of Pediococcus pentosaceus (strain ATCC 25745 / CCUG 21536 / LMG 10740 / 183-1w).